Here is a 62-residue protein sequence, read N- to C-terminus: MGWTVTVDTDKCTGDGECVDVCPVEVYELQDGKAVPVNEEECLGCESCVEVCEAGAITVEEN.

2 4Fe-4S ferredoxin-type domains span residues 3-32 and 33-62; these read WTVT…LQDG and KAVP…VEEN. 2 residues coordinate [3Fe-4S] cluster: Cys12 and Cys18. [4Fe-4S] cluster-binding residues include Cys22, Cys42, Cys45, and Cys48. Cys52 is a binding site for [3Fe-4S] cluster.

As to quaternary structure, homodimer. [3Fe-4S] cluster is required as a cofactor. [4Fe-4S] cluster serves as cofactor.

In terms of biological role, ferredoxins are iron-sulfur proteins that transfer electrons in a wide variety of metabolic reactions. This ferredoxin serves as a carrier for pyruvate dehydrogenase. This Nitratidesulfovibrio vulgaris (strain DSM 19637 / Miyazaki F) (Desulfovibrio vulgaris) protein is Ferredoxin-1.